The sequence spans 481 residues: MAETEKIEVRDVTRIERIGAHSHIRGLGLDDVLEARLVSQGMVGQKDARRAAGVVVQMVREGKIAGRCILLAGEPSTGKTAIAVGMAQALGTETPFTSMSGSEIYSLEMSKTEALSQALRKSIGVRIKEETEIIEGEVVEIQIERPASGTGQKVGKVTLKTTEMETNYDLGNKIIECFMKEKIQAGDVITIDKASGKVNKLGRSFTRARDYDATGAQTRFVQCPEGELQKRKEVVHTVTLHEIDVINSRTHGFLALFSGDTGEIKQEVRDQINNKVLEWREEGKAEINPGVLFIDEVHMLDIECFSFLNRALESDMAPVVVMATNRGITRIRGTNYRSPHGIPIDLLDRMIIIRTVPYSEKEVKEILKIRCEEEDCIMHPDALTILTRIATDTSLRYAIQLITTANLVCRRRKATEVNTEDVKKVYSLFLDENRSSKILKEYQDDYMFSEITEEVERDPAAGGGAKRRVEGGGGDAQPMEH.

Position 73-80 (73-80 (GEPSTGKT)) interacts with ATP. The tract at residues 453–481 (EEVERDPAAGGGAKRRVEGGGGDAQPMEH) is disordered.

Belongs to the RuvB family. Forms homohexameric rings. May form a dodecamer with rept made of two stacked hexameric rings. Component of the chromatin remodeling Ino80 complex. Interacts with Myc and pont. Higher expression occurs in primordia of mesoderm, anterior and posterior midgut and cephalic furrow early in gastrulation, as well as in endoderm and mesoderm lineages during germ band extension. Later in development expression is only maintained in endoderm cells. Expressed in thoracic and abdominal segment neural precursors of all embryonic chordotonal organs.

The protein localises to the nucleus. It carries out the reaction ATP + H2O = ADP + phosphate + H(+). Functionally, acts as a transcriptional coactivator in Wg signaling caused by altered arm signaling. Pont and rept interfere antagonistically with nuclear arm signaling function, and are required to enhance or reduce arm activity, respectively. Also an essential cofactor for the normal function of Myc; required for cellular proliferation and growth. Its function is as follows. Proposed core component of the chromatin remodeling Ino80 complex which is involved in transcriptional regulation, DNA replication and probably DNA repair. In Drosophila melanogaster (Fruit fly), this protein is RuvB-like helicase 2.